The sequence spans 486 residues: ATP-dependent rRNA helicase RRP3 (486 aa).

The span at 1-11 shows a compositional bias: basic residues; the sequence is MSKVTKQSKSH. Residues 1-52 form a disordered region; that stretch reads MSKVTKQSKSHKSSELVSLAEKIKQKALENRKQSREESQATEEANTASETEA. A coiled-coil region spans residues 17 to 49; sequence VSLAEKIKQKALENRKQSREESQATEEANTASE. Positions 21–38 are enriched in basic and acidic residues; the sequence is EKIKQKALENRKQSREES. Positions 41–52 are enriched in low complexity; that stretch reads TEEANTASETEA. Positions 66-94 match the Q motif motif; it reads SSFRELDLVPELIEACDNLNFTKPTPIQS. Positions 97 to 269 constitute a Helicase ATP-binding domain; it reads IPPALQGKDI…RASLTNPVKC (173 aa). Position 110-117 (110-117) interacts with ATP; that stretch reads AQTGSGKT. The short motif at 216 to 219 is the DEAD box element; sequence DEAD. The Helicase C-terminal domain maps to 300–446; the sequence is LLNEFIGKTT…SIVLSLRDSV (147 aa). The segment at 459–486 is disordered; the sequence is RRNKEKQTRGKGRRSRTATRENMDKEEE. The segment covering 476–486 has biased composition (basic and acidic residues); that stretch reads ATRENMDKEEE.

Belongs to the DEAD box helicase family. DDX47/RRP3 subfamily. As to quaternary structure, interacts with the SSU processome.

The protein localises to the nucleus. It catalyses the reaction ATP + H2O = ADP + phosphate + H(+). In terms of biological role, ATP-dependent rRNA helicase required for pre-ribosomal RNA processing. Involved in the maturation of the 35S-pre-rRNA and to its cleavage to mature 18S rRNA. The chain is ATP-dependent rRNA helicase RRP3 from Eremothecium gossypii (strain ATCC 10895 / CBS 109.51 / FGSC 9923 / NRRL Y-1056) (Yeast).